Consider the following 482-residue polypeptide: Aspartyl/glutamyl-tRNA(Asn/Gln) amidotransferase subunit B (482 aa).

The protein belongs to the GatB/GatE family. GatB subfamily. In terms of assembly, heterotrimer of A, B and C subunits.

The enzyme catalyses L-glutamyl-tRNA(Gln) + L-glutamine + ATP + H2O = L-glutaminyl-tRNA(Gln) + L-glutamate + ADP + phosphate + H(+). The catalysed reaction is L-aspartyl-tRNA(Asn) + L-glutamine + ATP + H2O = L-asparaginyl-tRNA(Asn) + L-glutamate + ADP + phosphate + 2 H(+). Allows the formation of correctly charged Asn-tRNA(Asn) or Gln-tRNA(Gln) through the transamidation of misacylated Asp-tRNA(Asn) or Glu-tRNA(Gln) in organisms which lack either or both of asparaginyl-tRNA or glutaminyl-tRNA synthetases. The reaction takes place in the presence of glutamine and ATP through an activated phospho-Asp-tRNA(Asn) or phospho-Glu-tRNA(Gln). The chain is Aspartyl/glutamyl-tRNA(Asn/Gln) amidotransferase subunit B from Thermotoga neapolitana (strain ATCC 49049 / DSM 4359 / NBRC 107923 / NS-E).